Consider the following 165-residue polypeptide: MFKKLFGLGSKTNEETIVAPLTGAVKNIEEVPDPVFAGRMMGDGVAIDPTEGVVVSPVDGEIVQLFHTKHAIGIKAKNGTEILIHVGLETVKMEGEGFEAHVSEGQAVKAGDKLISFDLELIREKAKSTITPIVITNTDAAESIKTTVGVTATKGSTEVMKVTMK.

The PTS EIIA type-1 domain occupies 33-137 (DPVFAGRMMG…STITPIVITN (105 aa)). Zn(2+)-binding residues include His70 and His85. The Tele-phosphohistidine intermediate; for EIIA activity role is filled by His85. His85 carries the phosphohistidine; by HPr modification.

Heterodimer with glycerol kinase (glpk). It depends on Zn(2+) as a cofactor.

The protein localises to the cytoplasm. Its function is as follows. The phosphoenolpyruvate-dependent sugar phosphotransferase system (sugar PTS), a major carbohydrate active transport system, catalyzes the phosphorylation of incoming sugar substrates concomitantly with their translocation across the cell membrane. The enzyme II complex composed of PtsG and Crr is involved in glucose transport. This Bacillus anthracis protein is PTS system glucose-specific EIIA component (crr).